Consider the following 409-residue polypeptide: Tryptophan synthase beta chain (409 aa).

The residue at position 95 (Lys-95) is an N6-(pyridoxal phosphate)lysine.

Belongs to the TrpB family. As to quaternary structure, tetramer of two alpha and two beta chains. Requires pyridoxal 5'-phosphate as cofactor.

The enzyme catalyses (1S,2R)-1-C-(indol-3-yl)glycerol 3-phosphate + L-serine = D-glyceraldehyde 3-phosphate + L-tryptophan + H2O. It participates in amino-acid biosynthesis; L-tryptophan biosynthesis; L-tryptophan from chorismate: step 5/5. In terms of biological role, the beta subunit is responsible for the synthesis of L-tryptophan from indole and L-serine. This Pseudomonas syringae pv. syringae (strain B728a) protein is Tryptophan synthase beta chain.